A 512-amino-acid chain; its full sequence is Probable anion transporter 3, chloroplastic (512 aa).

The N-terminal 44 residues, M1–R44, are a transit peptide targeting the chloroplast. The next 12 membrane-spanning stretches (helical) occupy residues V102–V124, V139–V159, V167–A187, L191–M211, V228–L248, L250–V270, W324–M344, A359–A379, K396–A416, A422–L442, A462–G482, and A486–A506.

This sequence belongs to the major facilitator superfamily. Sodium/anion cotransporter (TC 2.A.1.14) family. In terms of tissue distribution, expressed in roots.

The protein resides in the plastid. Its subcellular location is the chloroplast membrane. In terms of biological role, inorganic phosphate and probable anion transporter. The chain is Probable anion transporter 3, chloroplastic (ANTR3) from Arabidopsis thaliana (Mouse-ear cress).